The chain runs to 91 residues: MHYRSQRRSVLFTAPGLIVGALAIGAAGGISVSPGDILALVEKPHLLVAVLFVGAFTGIMVEQALSRMRRQDGARGTARAGRNSARRRMPS.

Transmembrane regions (helical) follow at residues 10 to 30 and 46 to 66; these read VLFT…AGGI and LLVA…QALS. The segment at 68–91 is disordered; that stretch reads MRRQDGARGTARAGRNSARRRMPS.

It localises to the cell membrane. This is an uncharacterized protein from Sinorhizobium fredii (strain NBRC 101917 / NGR234).